Reading from the N-terminus, the 361-residue chain is tRNA-specific 2-thiouridylase MnmA (361 aa).

ATP contacts are provided by residues 6–13 and leucine 32; that span reads AMSGGVDS. Cysteine 101 serves as the catalytic Nucleophile. A disulfide bridge links cysteine 101 with cysteine 194. Residue glycine 125 participates in ATP binding. The interval 144–146 is interaction with tRNA; that stretch reads KDQ. The Cysteine persulfide intermediate role is filled by cysteine 194.

The protein belongs to the MnmA/TRMU family.

It is found in the cytoplasm. The enzyme catalyses S-sulfanyl-L-cysteinyl-[protein] + uridine(34) in tRNA + AH2 + ATP = 2-thiouridine(34) in tRNA + L-cysteinyl-[protein] + A + AMP + diphosphate + H(+). Its function is as follows. Catalyzes the 2-thiolation of uridine at the wobble position (U34) of tRNA, leading to the formation of s(2)U34. This chain is tRNA-specific 2-thiouridylase MnmA, found in Corynebacterium aurimucosum (strain ATCC 700975 / DSM 44827 / CIP 107346 / CN-1) (Corynebacterium nigricans).